The primary structure comprises 265 residues: Phosphate import ATP-binding protein PstB (265 aa).

Residues 11 to 260 form the ABC transporter domain; the sequence is VSADEVKIAA…PRDPRTESYI (250 aa). 50–57 contributes to the ATP binding site; that stretch reads GPSGCGKS.

This sequence belongs to the ABC transporter superfamily. Phosphate importer (TC 3.A.1.7) family. As to quaternary structure, the complex is composed of two ATP-binding proteins (PstB), two transmembrane proteins (PstC and PstA) and a solute-binding protein (PstS).

It is found in the cell inner membrane. The catalysed reaction is phosphate(out) + ATP + H2O = ADP + 2 phosphate(in) + H(+). In terms of biological role, part of the ABC transporter complex PstSACB involved in phosphate import. Responsible for energy coupling to the transport system. The sequence is that of Phosphate import ATP-binding protein PstB from Cereibacter sphaeroides (strain ATCC 17023 / DSM 158 / JCM 6121 / CCUG 31486 / LMG 2827 / NBRC 12203 / NCIMB 8253 / ATH 2.4.1.) (Rhodobacter sphaeroides).